The primary structure comprises 72 residues: Translation initiation factor IF-1 (72 aa).

The S1-like domain maps to Met-1 to Lys-72.

Belongs to the IF-1 family. In terms of assembly, component of the 30S ribosomal translation pre-initiation complex which assembles on the 30S ribosome in the order IF-2 and IF-3, IF-1 and N-formylmethionyl-tRNA(fMet); mRNA recruitment can occur at any time during PIC assembly.

The protein localises to the cytoplasm. Functionally, one of the essential components for the initiation of protein synthesis. Stabilizes the binding of IF-2 and IF-3 on the 30S subunit to which N-formylmethionyl-tRNA(fMet) subsequently binds. Helps modulate mRNA selection, yielding the 30S pre-initiation complex (PIC). Upon addition of the 50S ribosomal subunit IF-1, IF-2 and IF-3 are released leaving the mature 70S translation initiation complex. The sequence is that of Translation initiation factor IF-1 from Sulfurimonas denitrificans (strain ATCC 33889 / DSM 1251) (Thiomicrospira denitrificans (strain ATCC 33889 / DSM 1251)).